The chain runs to 375 residues: UDP-N-acetylglucosamine--N-acetylmuramyl-(pentapeptide) pyrophosphoryl-undecaprenol N-acetylglucosamine transferase (375 aa).

UDP-N-acetyl-alpha-D-glucosamine-binding positions include 15–17 (TGG), N126, R169, S197, and Q298.

It belongs to the glycosyltransferase 28 family. MurG subfamily.

The protein localises to the cell inner membrane. The enzyme catalyses di-trans,octa-cis-undecaprenyl diphospho-N-acetyl-alpha-D-muramoyl-L-alanyl-D-glutamyl-meso-2,6-diaminopimeloyl-D-alanyl-D-alanine + UDP-N-acetyl-alpha-D-glucosamine = di-trans,octa-cis-undecaprenyl diphospho-[N-acetyl-alpha-D-glucosaminyl-(1-&gt;4)]-N-acetyl-alpha-D-muramoyl-L-alanyl-D-glutamyl-meso-2,6-diaminopimeloyl-D-alanyl-D-alanine + UDP + H(+). Its pathway is cell wall biogenesis; peptidoglycan biosynthesis. Cell wall formation. Catalyzes the transfer of a GlcNAc subunit on undecaprenyl-pyrophosphoryl-MurNAc-pentapeptide (lipid intermediate I) to form undecaprenyl-pyrophosphoryl-MurNAc-(pentapeptide)GlcNAc (lipid intermediate II). This is UDP-N-acetylglucosamine--N-acetylmuramyl-(pentapeptide) pyrophosphoryl-undecaprenol N-acetylglucosamine transferase from Rhodopseudomonas palustris (strain BisB18).